The following is a 1079-amino-acid chain: Adhesion G-protein coupled receptor F3 (1079 aa).

Positions 1 to 25 are cleaved as a signal peptide; it reads MVCSAAPLLLLATTLPLLGSPVAQA. Residues 26 to 775 are Extracellular-facing; the sequence is SQPVSETGVR…EEPALALLTQ (750 aa). N-linked (GlcNAc...) asparagine glycans are attached at residues asparagine 188, asparagine 264, asparagine 301, asparagine 382, asparagine 441, and asparagine 648. Residues 599-765 form the GAIN-B domain; sequence HPFAFSLPNV…SVLMSPHTVP (167 aa). 2 disulfide bridges follow: cysteine 715/cysteine 747 and cysteine 734/cysteine 749. The GPS stretch occupies residues 715 to 765; that stretch reads CVFWDHSLFQGRGGWSKEGCQAQVASASPTAQCLCQHLTAFSVLMSPHTVP. Residues 776 to 796 traverse the membrane as a helical segment; the sequence is VGLGASILALLVCLGVYWLVW. Over 797-811 the chain is Cytoplasmic; sequence RVVVRNKISYFRHAA. A helical membrane pass occupies residues 812–832; sequence LLNMVFCLLAADTCFLGAPFL. Residues 833-851 are Extracellular-facing; that stretch reads SPGPRSPLCLAAAFLCHFL. A helical transmembrane segment spans residues 852–874; sequence YLATFFWMLAQALVLAHQLLFVF. Topologically, residues 875–881 are cytoplasmic; that stretch reads HQLAKHR. The helical transmembrane segment at 882 to 902 threads the bilayer; that stretch reads VLPLMVLLGYLCPLGLAGVTL. Topologically, residues 903–928 are extracellular; sequence GLYLPQGQYLREGECWLDGKGGALYT. A helical membrane pass occupies residues 929–949; it reads FVGPVLAIIGVNGLVLAMAML. At 950–973 the chain is on the cytoplasmic side; sequence KLLRPSLSEGPPAEKRQALLGVIK. A helical transmembrane segment spans residues 974–994; the sequence is ALLILTPIFGLTWGLGLATLL. Residues 995–1002 are Extracellular-facing; sequence EEVSTVPH. Residues 1003-1023 form a helical membrane-spanning segment; it reads YIFTILNTLQGVFILLFGCLM. The Cytoplasmic segment spans residues 1024–1079; that stretch reads DRKIQEALRKRFCRAQAPSSTISLVSCCLQILSCASKSMSEGIPWPSSEDMGTARS.

This sequence belongs to the G-protein coupled receptor 2 family. Adhesion G-protein coupled receptor (ADGR) subfamily. In terms of assembly, heterodimer of 2 chains generated by proteolytic processing; the large extracellular N-terminal fragment and the membrane-bound C-terminal fragment predominantly remain associated and non-covalently linked. Autoproteolytically processed at the GPS region of the GAIN-B domain; this cleavage modulates receptor activity.

It localises to the membrane. Its function is as follows. Orphan receptor. The sequence is that of Adhesion G-protein coupled receptor F3 (ADGRF3) from Homo sapiens (Human).